A 229-amino-acid chain; its full sequence is Potassium/proton antiporter CemA (229 aa).

Helical transmembrane passes span 6–26, 107–127, and 189–209; these read AFIP…ISLC, ILHF…SFWG, and ILSG…KYWI.

This sequence belongs to the CemA family.

Its subcellular location is the plastid. It localises to the chloroplast inner membrane. It catalyses the reaction K(+)(in) + H(+)(out) = K(+)(out) + H(+)(in). Its function is as follows. Contributes to K(+)/H(+) antiport activity by supporting proton efflux to control proton extrusion and homeostasis in chloroplasts in a light-dependent manner to modulate photosynthesis. Prevents excessive induction of non-photochemical quenching (NPQ) under continuous-light conditions. Indirectly promotes efficient inorganic carbon uptake into chloroplasts. This is Potassium/proton antiporter CemA from Barbarea verna (Land cress).